The chain runs to 329 residues: Cathepsin K (329 aa).

A signal peptide spans 1 to 15 (MWVFKFLLLPVVSFA). Positions 16 to 114 (LSPEETLDTQ…TLYTPEWEGR (99 aa)) are cleaved as a propeptide — activation peptide. Asn103 is a glycosylation site (N-linked (GlcNAc...) asparagine). 2 cysteine pairs are disulfide-bonded: Cys136–Cys177 and Cys170–Cys210. Residue Cys139 is part of the active site. Asn213 carries an N-linked (GlcNAc...) asparagine glycan. Cys269 and Cys318 form a disulfide bridge. Catalysis depends on residues His276 and Asn296.

This sequence belongs to the peptidase C1 family.

It is found in the lysosome. Its subcellular location is the secreted. The protein resides in the apical cell membrane. It catalyses the reaction Broad proteolytic activity. With small-molecule substrates and inhibitors, the major determinant of specificity is P2, which is preferably Leu, Met &gt; Phe, and not Arg.. Its function is as follows. Thiol protease involved in osteoclastic bone resorption and may participate partially in the disorder of bone remodeling. Displays potent endoprotease activity against fibrinogen at acid pH. May play an important role in extracellular matrix degradation. Involved in the release of thyroid hormone thyroxine (T4) by limited proteolysis of TG/thyroglobulin in the thyroid follicle lumen. This chain is Cathepsin K (Ctsk), found in Rattus norvegicus (Rat).